Reading from the N-terminus, the 220-residue chain is RNA polymerase sigma GP28 factor (220 aa).

Sigma factors are initiation factors that promote the attachment of RNA polymerase to specific initiation sites and are then released. This sigma factor is responsible for the expression of the phage middle genes. The polypeptide is RNA polymerase sigma GP28 factor (28) (Bacillus subtilis (Bacteriophage SP01)).